The sequence spans 348 residues: Phosphoribosylformylglycinamidine cyclo-ligase (348 aa).

This sequence belongs to the AIR synthase family.

It is found in the cytoplasm. The catalysed reaction is 2-formamido-N(1)-(5-O-phospho-beta-D-ribosyl)acetamidine + ATP = 5-amino-1-(5-phospho-beta-D-ribosyl)imidazole + ADP + phosphate + H(+). It participates in purine metabolism; IMP biosynthesis via de novo pathway; 5-amino-1-(5-phospho-D-ribosyl)imidazole from N(2)-formyl-N(1)-(5-phospho-D-ribosyl)glycinamide: step 2/2. The polypeptide is Phosphoribosylformylglycinamidine cyclo-ligase (Aromatoleum aromaticum (strain DSM 19018 / LMG 30748 / EbN1) (Azoarcus sp. (strain EbN1))).